We begin with the raw amino-acid sequence, 287 residues long: Cysteine-rich repeat secretory protein 58 (287 aa).

A signal peptide spans 1 to 20 (METTKKLFALLCLFVTMNQA). Residues 21–267 (ISVSDPDDME…GSFSHRGNNK (247 aa)) are Extracellular-facing. 2 consecutive Gnk2-homologous domains span residues 28–130 (DMET…DKFF) and 135–246 (ETNP…TYNS). Residues asparagine 39, asparagine 43, asparagine 59, asparagine 68, asparagine 89, asparagine 99, asparagine 107, asparagine 208, and asparagine 245 are each glycosylated (N-linked (GlcNAc...) asparagine). A helical membrane pass occupies residues 268–286 (LLGGMVLAVSVSVFAFLSL). Residue valine 287 is a topological domain, cytoplasmic.

Belongs to the cysteine-rich repeat secretory protein family.

Its subcellular location is the membrane. The protein is Cysteine-rich repeat secretory protein 58 (CRRSP58) of Arabidopsis thaliana (Mouse-ear cress).